The following is a 168-amino-acid chain: Photosystem I assembly protein Ycf3 (168 aa).

3 TPR repeats span residues 35–68 (AFTY…EIDP), 72–105 (SYIL…NPFL), and 120–153 (GEQA…TPGN).

It belongs to the Ycf3 family.

Its subcellular location is the plastid. The protein resides in the chloroplast thylakoid membrane. Functionally, essential for the assembly of the photosystem I (PSI) complex. May act as a chaperone-like factor to guide the assembly of the PSI subunits. This chain is Photosystem I assembly protein Ycf3, found in Phalaenopsis aphrodite subsp. formosana (Moth orchid).